Reading from the N-terminus, the 650-residue chain is MSKIKNDKRETGHLKSPPETPLLNRVRFPSDLKQIPEEDLPQLAEELRAEMIDAVSQTGGHLGAGLGVVELTVALHYIFDTPHDRLIWDVGHQAYPHKILTGRRDRIRTLRQEDGLSGFTKRSESEYDPFGAAHSSTSISAGLGMAVARELSGGQRHVIAVIGDGALSAGMAYEAMNNAGALDARLIVILNDNDMSIAPPTGAMSTYLARLASGRAYRGIRDVGKKLTSHLGKSFDRAITRAVEHARGFVTGGTLFEEMGFFHIGPIDGHDLEALVPVLRNVRDNGTGPVLIHVVTQKGKGYPPAEAAADKYHGVAKFDVITGAQAKSPAGAPSYTKVFAQALVQEAREDKRIVAITAAMPSGTGLDLFEKEFPDRSFDVGIAEQHAVTFAAGLATEGYRPFAAIYSTFLQRAYDQVVHDVAIQNLPVRFAIDRAGFVGADGATHCGAFDVAYLATLPNMVVMAAADEAELKHMVRTAADHDEGPIAFRYPRGEGTGVPLPQRGEILKIGKGRIVREGSKIALLSLGTRLADCMIAAEELEAAGLSTTVADARFAKPLDADLIRRLAREHEVLVTVEEGSIGGFGAHVLHFLAHEGLLENGLKVRPLVMPDIFMDQAKPEKMYAKAGLDAAGIVKTVFAALGQAEQAARA.

Residues 1 to 13 (MSKIKNDKRETGH) are compositionally biased toward basic and acidic residues. The tract at residues 1 to 23 (MSKIKNDKRETGHLKSPPETPLL) is disordered. Thiamine diphosphate-binding positions include His-92 and 133–135 (AHS). Asp-164 contacts Mg(2+). Thiamine diphosphate contacts are provided by residues 165-166 (GA), Asn-193, Tyr-302, and Glu-384. Mg(2+) is bound at residue Asn-193.

This sequence belongs to the transketolase family. DXPS subfamily. In terms of assembly, homodimer. It depends on Mg(2+) as a cofactor. Requires thiamine diphosphate as cofactor.

It catalyses the reaction D-glyceraldehyde 3-phosphate + pyruvate + H(+) = 1-deoxy-D-xylulose 5-phosphate + CO2. The protein operates within metabolic intermediate biosynthesis; 1-deoxy-D-xylulose 5-phosphate biosynthesis; 1-deoxy-D-xylulose 5-phosphate from D-glyceraldehyde 3-phosphate and pyruvate: step 1/1. In terms of biological role, catalyzes the acyloin condensation reaction between C atoms 2 and 3 of pyruvate and glyceraldehyde 3-phosphate to yield 1-deoxy-D-xylulose-5-phosphate (DXP). The chain is 1-deoxy-D-xylulose-5-phosphate synthase from Chelativorans sp. (strain BNC1).